A 519-amino-acid chain; its full sequence is Exodeoxyribonuclease 7 large subunit (519 aa).

The interval 500–519 is disordered; it reads VGRGKTRKPKEEPPAQGSLL.

Belongs to the XseA family. Heterooligomer composed of large and small subunits.

Its subcellular location is the cytoplasm. It carries out the reaction Exonucleolytic cleavage in either 5'- to 3'- or 3'- to 5'-direction to yield nucleoside 5'-phosphates.. Its function is as follows. Bidirectionally degrades single-stranded DNA into large acid-insoluble oligonucleotides, which are then degraded further into small acid-soluble oligonucleotides. This Cereibacter sphaeroides (strain ATCC 17023 / DSM 158 / JCM 6121 / CCUG 31486 / LMG 2827 / NBRC 12203 / NCIMB 8253 / ATH 2.4.1.) (Rhodobacter sphaeroides) protein is Exodeoxyribonuclease 7 large subunit.